Consider the following 418-residue polypeptide: MNVALEVQTKGQRAREAARILAGLGTSKKNEALLAMARALEEEQEAILAANARDMVAGKEKGLSRALLDRLLLNEKRIRDMAAGLRELAALPDPVGEVTSMWTRPNGLQIGRVRVPLGVIGIIYEARPNVTVDAAGLCLKTGNAVILRGGSEAFYSNQALTRVISRAATAAGAPEGAIQLIETTDREAVNLLLRANDYLDVLIPRGGAGLIRTVVENATVPVIETGVGNCHVYVDAEADLDMAQRIVINAKTQRPGVCNAMETLLVHEKVADSFLPSLAAALKEKGVTIRGCERTRAIIPWAEVATETDWATEYLDLILAIRVVDSLESALEHIHRYGTKHSEAIVTTNYQTAREFLARVDAAAVYVNASTRFTDGYEFGFGAEIGISTQKLHARGPMGPEQLTTFKYIIFGSGQIRQ.

Belongs to the gamma-glutamyl phosphate reductase family.

The protein localises to the cytoplasm. It carries out the reaction L-glutamate 5-semialdehyde + phosphate + NADP(+) = L-glutamyl 5-phosphate + NADPH + H(+). It participates in amino-acid biosynthesis; L-proline biosynthesis; L-glutamate 5-semialdehyde from L-glutamate: step 2/2. Functionally, catalyzes the NADPH-dependent reduction of L-glutamate 5-phosphate into L-glutamate 5-semialdehyde and phosphate. The product spontaneously undergoes cyclization to form 1-pyrroline-5-carboxylate. This chain is Gamma-glutamyl phosphate reductase, found in Moorella thermoacetica (strain ATCC 39073 / JCM 9320).